A 500-amino-acid chain; its full sequence is Lycopene beta cyclase, chloroplastic (500 aa).

Residues 1–81 constitute a chloroplast transit peptide; that stretch reads MDTLLKTPNK…ELPMYDPSKG (81 aa). 86–114 provides a ligand contact to NAD(+); it reads LAVVGGGPAGLAVAQQVSEAGLSVVSIDP.

Belongs to the lycopene cyclase family.

The protein localises to the plastid. Its subcellular location is the chloroplast. The enzyme catalyses a carotenoid psi-end group = a carotenoid beta-end derivative. It participates in carotenoid biosynthesis; beta-carotene biosynthesis. It functions in the pathway carotenoid biosynthesis; beta-zeacarotene biosynthesis. In terms of biological role, catalyzes the double cyclization reaction which converts lycopene to beta-carotene and neurosporene to beta-zeacarotene. The protein is Lycopene beta cyclase, chloroplastic (LCY1) of Nicotiana tabacum (Common tobacco).